A 600-amino-acid polypeptide reads, in one-letter code: Alpha pinene synthase, chloroplastic (600 aa).

The disordered stretch occupies residues 1–27; that stretch reads MSSISMHAGPLNISAANNHHPSWDRRV. Residues 1–31 constitute a chloroplast transit peptide; it reads MSSISMHAGPLNISAANNHHPSWDRRVSKPR. Mg(2+) is bound by residues Asp354, Asp358, Asp498, and Glu506. A DDXXD motif motif is present at residues 354 to 358; that stretch reads DDVYD.

It belongs to the terpene synthase family. Tpsa subfamily. Mg(2+) is required as a cofactor. It depends on Mn(2+) as a cofactor. Expressed at low levels in leaves.

It localises to the plastid. The protein resides in the chloroplast. It carries out the reaction (2E)-geranyl diphosphate = alpha-pinene + diphosphate. It functions in the pathway secondary metabolite biosynthesis; terpenoid biosynthesis. Monoterpene synthase involved in the biosynthesis of volatile compounds widely used in aromatherapy and folk medicine, and present in culinary herbs. Mediates the conversion of (2E)-geranyl diphosphate (GPP) into alpha-pinene and, as minor compounds, into alpha-phellandrene, limonene and alpha-terpinolene. The polypeptide is Alpha pinene synthase, chloroplastic (Lavandula viridis (Green lavender)).